Here is a 476-residue protein sequence, read N- to C-terminus: ATP synthase subunit beta (476 aa).

Position 154–161 (154–161 (GGAGVGKT)) interacts with ATP.

Belongs to the ATPase alpha/beta chains family. As to quaternary structure, F-type ATPases have 2 components, CF(1) - the catalytic core - and CF(0) - the membrane proton channel. CF(1) has five subunits: alpha(3), beta(3), gamma(1), delta(1), epsilon(1). CF(0) has three main subunits: a(1), b(2) and c(9-12). The alpha and beta chains form an alternating ring which encloses part of the gamma chain. CF(1) is attached to CF(0) by a central stalk formed by the gamma and epsilon chains, while a peripheral stalk is formed by the delta and b chains.

It is found in the cell inner membrane. It catalyses the reaction ATP + H2O + 4 H(+)(in) = ADP + phosphate + 5 H(+)(out). Its function is as follows. Produces ATP from ADP in the presence of a proton gradient across the membrane. The catalytic sites are hosted primarily by the beta subunits. The chain is ATP synthase subunit beta from Nitrobacter hamburgensis (strain DSM 10229 / NCIMB 13809 / X14).